The chain runs to 186 residues: Probable peptidyl-tRNA hydrolase 2 (186 aa).

This sequence belongs to the PTH2 family.

It catalyses the reaction an N-acyl-L-alpha-aminoacyl-tRNA + H2O = an N-acyl-L-amino acid + a tRNA + H(+). In terms of biological role, the natural substrate for this enzyme may be peptidyl-tRNAs which drop off the ribosome during protein synthesis. In Drosophila melanogaster (Fruit fly), this protein is Probable peptidyl-tRNA hydrolase 2.